We begin with the raw amino-acid sequence, 117 residues long: Large ribosomal subunit protein bL20 (117 aa).

The protein belongs to the bacterial ribosomal protein bL20 family.

Functionally, binds directly to 23S ribosomal RNA and is necessary for the in vitro assembly process of the 50S ribosomal subunit. It is not involved in the protein synthesizing functions of that subunit. The chain is Large ribosomal subunit protein bL20 from Streptococcus suis (strain 05ZYH33).